The chain runs to 548 residues: DNA ligase (548 aa).

ATP is bound at residue E252. K254 (N6-AMP-lysine intermediate) is an active-site residue. ATP is bound by residues R259, R274, E303, F343, R414, and K420.

This sequence belongs to the ATP-dependent DNA ligase family. The cofactor is Mg(2+).

The enzyme catalyses ATP + (deoxyribonucleotide)n-3'-hydroxyl + 5'-phospho-(deoxyribonucleotide)m = (deoxyribonucleotide)n+m + AMP + diphosphate.. Its function is as follows. DNA ligase that seals nicks in double-stranded DNA during DNA replication, DNA recombination and DNA repair. This is DNA ligase from Natronomonas pharaonis (strain ATCC 35678 / DSM 2160 / CIP 103997 / JCM 8858 / NBRC 14720 / NCIMB 2260 / Gabara) (Halobacterium pharaonis).